The sequence spans 205 residues: Large ribosomal subunit protein uL3c (205 aa).

The interval 129–154 (SRGPMSHGSKNHRQPGSIGAGTTPGR) is disordered.

This sequence belongs to the universal ribosomal protein uL3 family. As to quaternary structure, part of the 50S ribosomal subunit.

Its subcellular location is the plastid. The protein localises to the chloroplast. Its function is as follows. One of the primary rRNA binding proteins, it binds directly near the 3'-end of the 23S rRNA, where it nucleates assembly of the 50S subunit. The polypeptide is Large ribosomal subunit protein uL3c (rpl3) (Pyropia yezoensis (Susabi-nori)).